Consider the following 342-residue polypeptide: MTNLTLALDAMGGDFGPRITVPATLQALRLYPFLHVIMVGDRSQIEPLLSHLESDLLSRIELVHTTEVVKMCDRPVHALRNCKQSSMRLAIELVRDKKAQACLSAGNTGALMAISKVLLKTLPGIDRPALVSCLPAVNHKPVYLLDLGANVSCCSETLFQFAVMGSVLCEAVDKNPAPKVALLNVGIEEIKGNDQVQQAGQLLQQSPQLNYAGFIEGDDIYSGNVDVIVCDGFVGNITLKTSEGIARLLVHQLKKGLTQGFFVRLLAKLIAPRINSVLNQMNPDHYNGASLIGLRGIVVKSHGSADESAYLQAISLAVTEAQRRLPKMIEERLESILLDINN.

It belongs to the PlsX family. Homodimer. Probably interacts with PlsY.

The protein localises to the cytoplasm. The enzyme catalyses a fatty acyl-[ACP] + phosphate = an acyl phosphate + holo-[ACP]. It participates in lipid metabolism; phospholipid metabolism. Functionally, catalyzes the reversible formation of acyl-phosphate (acyl-PO(4)) from acyl-[acyl-carrier-protein] (acyl-ACP). This enzyme utilizes acyl-ACP as fatty acyl donor, but not acyl-CoA. This Shewanella loihica (strain ATCC BAA-1088 / PV-4) protein is Phosphate acyltransferase.